The following is a 397-amino-acid chain: (S)-8-oxocitronellyl enol synthase ISY2 (397 aa).

NADP(+) is bound by residues 36–38, 64–65, 82–83, 106–107, Q144, Y180, I207, and 214–216; these read TGL, RR, DV, TW, and SMM. Residue Y180 is part of the active site.

The protein belongs to the short-chain dehydrogenases/reductases (SDR) family.

The enzyme catalyses (S)-8-oxocitronellyl enol + NADP(+) = (6E)-8-oxogeranial + NADPH + H(+). The catalysed reaction is (S)-8-oxocitronellyl enol + NAD(+) = (6E)-8-oxogeranial + NADH + H(+). Its function is as follows. Iridoid synthase that catalyzes the first step in generation of the iridoid ring scaffold using the linear monoterpene (6E)-8-oxogeranial as substrate. Iridoids comprise a large family of distinctive bicyclic monoterpenes that possess a wide range of pharmacological activities, including anticancer, anti-inflammatory, antifungal and antibacterial activities. Catalyzes the conversion of the linear monoterpene (6E)-8-oxogeranial to (S)-8-oxocitronellyl enol, a precursor of nepetalactones, which are metabolites that are both insect-repellent and have euphoric effect in cats. The sequence is that of (S)-8-oxocitronellyl enol synthase ISY2 from Nepeta cataria (Catnip).